Reading from the N-terminus, the 260-residue chain is Ribose-5-phosphate isomerase A (260 aa).

Residues 33 to 36 (TGST), 89 to 92 (DGAD), and 102 to 105 (KGGG) contribute to the substrate site. Glutamate 111 (proton acceptor) is an active-site residue. Lysine 129 lines the substrate pocket.

This sequence belongs to the ribose 5-phosphate isomerase family. In terms of assembly, homodimer.

The enzyme catalyses aldehydo-D-ribose 5-phosphate = D-ribulose 5-phosphate. Its pathway is carbohydrate degradation; pentose phosphate pathway; D-ribose 5-phosphate from D-ribulose 5-phosphate (non-oxidative stage): step 1/1. Catalyzes the reversible conversion of ribose-5-phosphate to ribulose 5-phosphate. The sequence is that of Ribose-5-phosphate isomerase A from Dinoroseobacter shibae (strain DSM 16493 / NCIMB 14021 / DFL 12).